The chain runs to 315 residues: Acetyl-coenzyme A carboxylase carboxyl transferase subunit alpha (315 aa).

Positions 36–289 constitute a CoA carboxyltransferase C-terminal domain; the sequence is LGKKRLELME…RKAVAAELKV (254 aa).

Belongs to the AccA family. In terms of assembly, acetyl-CoA carboxylase is a heterohexamer composed of biotin carboxyl carrier protein (AccB), biotin carboxylase (AccC) and two subunits each of ACCase subunit alpha (AccA) and ACCase subunit beta (AccD).

The protein localises to the cytoplasm. It catalyses the reaction N(6)-carboxybiotinyl-L-lysyl-[protein] + acetyl-CoA = N(6)-biotinyl-L-lysyl-[protein] + malonyl-CoA. It participates in lipid metabolism; malonyl-CoA biosynthesis; malonyl-CoA from acetyl-CoA: step 1/1. Component of the acetyl coenzyme A carboxylase (ACC) complex. First, biotin carboxylase catalyzes the carboxylation of biotin on its carrier protein (BCCP) and then the CO(2) group is transferred by the carboxyltransferase to acetyl-CoA to form malonyl-CoA. The polypeptide is Acetyl-coenzyme A carboxylase carboxyl transferase subunit alpha (Francisella philomiragia subsp. philomiragia (strain ATCC 25017 / CCUG 19701 / FSC 153 / O#319-036)).